The following is a 118-amino-acid chain: Large ribosomal subunit protein bL20 (118 aa).

This sequence belongs to the bacterial ribosomal protein bL20 family.

Binds directly to 23S ribosomal RNA and is necessary for the in vitro assembly process of the 50S ribosomal subunit. It is not involved in the protein synthesizing functions of that subunit. The chain is Large ribosomal subunit protein bL20 from Campylobacter curvus (strain 525.92).